The sequence spans 615 residues: Vitamin B12 transporter BtuB (615 aa).

The N-terminal stretch at 1-20 (MIKKVSLMTALSVTAFSGWA) is a signal peptide. The TonB box signature appears at 25–32 (DSLVVTAN). The TBDR plug domain maps to 37 to 151 (PANTVLAPTS…IGGVVNIITT (115 aa)). Cyanocob(III)alamin-binding positions include serine 84, asparagine 91, and 109-110 (VT). Residues 154-615 (KDGTTLNAGV…EYTLSGSYTF (462 aa)) form the TBDR beta-barrel domain. 3 beta stranded membrane-spanning segments follow: residues 157–164 (TTLNAGVG), 168–177 (YQNYGGSTQQ), and 183–194 (TRVTLAGDYTYT). Aspartate 198, glutamine 210, aspartate 212, and aspartate 214 together coordinate Ca(2+). Transmembrane regions (beta stranded) follow at residues 216 to 226 (YMNKTIYGALE) and 231 to 247 (DQWS…NRTA). 2 residues coordinate Ca(2+): tyrosine 248 and aspartate 249. Alanine 250 contributes to the cyanocob(III)alamin binding site. Aspartate 262 contacts Ca(2+). 17 beta stranded membrane-spanning segments follow: residues 264–278 (RQLY…LRFN), 280–297 (GIFH…KDYN), 310–326 (TLDE…NSVD), 329–338 (HGNVGAGVDW), 354–370 (TNLR…QKFG), 372–382 (FTLEGAARSDD), 386–401 (FGRH…WEFI), 404–418 (YRFI…KAPN), 435–444 (ESKQWEGAFE), 450–459 (VSWRVSAYRN), 474–491 (YYNV…TASF), 495–510 (PLTH…ARNA), 518–530 (RRAK…QLDT), 536–551 (DWSL…YDTD), 559–573 (KVKM…LAVS), 586–597 (IANLFDKDYETV), and 603–615 (AGRE…SYTF). Threonine 310 contacts cyanocob(III)alamin. Arginine 518 is a cyanocob(III)alamin binding site. Positions 598–615 (YGYETAGREYTLSGSYTF) match the TonB C-terminal box motif.

This sequence belongs to the TonB-dependent receptor family. BtuB (TC 1.B.14.3.1) subfamily.

The protein localises to the cell outer membrane. Involved in the active translocation of vitamin B12 (cyanocobalamin) across the outer membrane to the periplasmic space. It derives its energy for transport by interacting with the trans-periplasmic membrane protein TonB. The polypeptide is Vitamin B12 transporter BtuB (Enterobacter sp. (strain 638)).